Here is a 248-residue protein sequence, read N- to C-terminus: Large ribosomal subunit protein uL30 (248 aa).

Residue Met1 is modified to N-acetylmethionine. Repeat copies occupy residues 7–18 (KKKKVPAVPETL), 19–30 (KKKRKNFAELKI), 31–42 (KRLRKKFAQKML), and 43–54 (RKARRKLIYEKA). A 4 X 12 AA tandem repeats region spans residues 7–54 (KKKKVPAVPETLKKKRKNFAELKIKRLRKKFAQKMLRKARRKLIYEKA). Thr17 carries the post-translational modification Phosphothreonine. Position 124 is an N6-acetyllysine (Lys124). Lys127 carries the N6-succinyllysine modification. Position 139 is a phosphotyrosine (Tyr139).

This sequence belongs to the universal ribosomal protein uL30 family. In terms of assembly, component of the large ribosomal subunit. Homodimer. Interacts with DHX33.

The protein localises to the cytoplasm. Functionally, component of the large ribosomal subunit. The ribosome is a large ribonucleoprotein complex responsible for the synthesis of proteins in the cell. Binds to G-rich structures in 28S rRNA and in mRNAs. Plays a regulatory role in the translation apparatus; inhibits cell-free translation of mRNAs. This Bos taurus (Bovine) protein is Large ribosomal subunit protein uL30 (RPL7).